The chain runs to 230 residues: Mitochondrial fission factor homolog B (230 aa).

Over 1–210 (MSGAAFPSPT…ENKERAKREM (210 aa)) the chain is Cytoplasmic. Residues 117–153 (EQTSSVSHPSEEVRTQTKTRRERSVSENAGVHHNGPL) are disordered. A Phosphoserine modification is found at serine 142. Positions 179-210 (VDATSLRRQIVKLNRRLQLLEEENKERAKREM) form a coiled coil. The chain crosses the membrane as a helical; Anchor for type IV membrane protein span at residues 211 to 228 (VMYSITVAFWLVNSWVWF). Residues 229 to 230 (RR) lie on the Extracellular side of the membrane.

The protein belongs to the Tango11 family.

The protein localises to the mitochondrion outer membrane. Its subcellular location is the peroxisome. Plays a role in mitochondrial and peroxisomal fission. Promotes the recruitment and association of the fission mediator dynamin-related protein 1 (DNM1L) to the mitochondrial surface. The protein is Mitochondrial fission factor homolog B of Danio rerio (Zebrafish).